The sequence spans 465 residues: Solute carrier family 7 member 12 (465 aa).

Residues 1–6 (MQLLRA) lie on the Cytoplasmic side of the membrane. Residues 7–27 (LGVFHVSMILFSATLGTGIFV) form a helical membrane-spanning segment. At 28-39 (TPKAVLKYSSLN) the chain is on the extracellular side. A helical transmembrane segment spans residues 40–60 (IPVSLSIWAGCGLLSIMSALC). Over 61-81 (NAEIATTYPLSGASYYFLKRT) the chain is Cytoplasmic. Residues 82–102 (LGSSVAFLSLWIKLFAHFLGI) traverse the membrane as a helical segment. Over 103-132 (GAQCLLIATSVIQCFYSGCPAPELPTKCLA) the chain is Extracellular. Residues 133–153 (LAILWSFGIVSARGIKTVAWF) traverse the membrane as a helical segment. N154 is a topological domain (cytoplasmic). Residues 155–175 (TVSSFIKLSVLCLISLTVLLV) traverse the membrane as a helical segment. The Extracellular segment spans residues 176 to 202 (NGKKENVSRFENALDAELPNASQIADA). A helical membrane pass occupies residues 203-223 (ILQVSYSYLGSSVLIVIAGEI). Topologically, residues 224–234 (KRPTETIPKTL) are cytoplasmic. Residues 235–255 (IYGISIVTVLYLLTNISYLAV) traverse the membrane as a helical segment. At 256–280 (LTSQEIIFSDSVGVTWMNRVFPSIQ) the chain is on the extracellular side. The helical transmembrane segment at 281–301 (WISSFLISAFLLGSVSCGIVS) threads the bilayer. Topologically, residues 302–327 (ASRVFYSASQEGEFPSIYSMLNDHHS) are cytoplasmic. Residues 328 to 351 (PAVADIQIVILSSVAIISSSIIYL) form a helical membrane-spanning segment. The Extracellular portion of the chain corresponds to 352 to 356 (VKYVS). Residues 357–375 (LGSFCINLLQMIGLLKIRY) form a helical membrane-spanning segment. The Cytoplasmic segment spans residues 376 to 386 (QNPDIPRPYKV). The helical transmembrane segment at 387–407 (WLPFIFGSIALSLFLIFTPVI) threads the bilayer. Over 408 to 409 (QS) the chain is Extracellular. The helical transmembrane segment at 410–430 (PSIEHVYQVVFLFCGFLCYWL) threads the bilayer. Residues 431–465 (QANLNGHATCFDTITCYCQLLFNISPSEDPEEQKN) lie on the Cytoplasmic side of the membrane.

The protein belongs to the amino acid-polyamine-organocation (APC) superfamily. In terms of assembly, probably forms multimers, perhaps with an unknown protein(s). In terms of tissue distribution, expressed in kidney and red blood cells (at protein level). Expressed in kidney along the collecting ducts in the cortex, outer and inner medulla. May be expressed in placenta, lungs, spleen and skeletal muscles.

The protein localises to the apical cell membrane. The protein resides in the basal cell membrane. Its subcellular location is the cytoplasm. Probably mediates sodium- and chloride-independent uptake of neutral amino acids. This Mus musculus (Mouse) protein is Solute carrier family 7 member 12.